A 329-amino-acid polypeptide reads, in one-letter code: BTB/POZ domain-containing protein At1g55760 (329 aa).

The BTB domain maps to 164–231 (TDITINASDG…IYGNIQNEDF (68 aa)).

Its pathway is protein modification; protein ubiquitination. Functionally, may act as a substrate-specific adapter of an E3 ubiquitin-protein ligase complex (CUL3-RBX1-BTB) which mediates the ubiquitination and subsequent proteasomal degradation of target proteins. This is BTB/POZ domain-containing protein At1g55760 from Arabidopsis thaliana (Mouse-ear cress).